A 114-amino-acid polypeptide reads, in one-letter code: Protein ELF4-LIKE 4 (114 aa).

The disordered stretch occupies residues Ser-87–Gly-114. A compositionally biased stretch (polar residues) spans Asp-89–Leu-100.

This sequence belongs to the EARLY FLOWERING 4 family. As to quaternary structure, homodimer.

The protein resides in the nucleus. Component of the central CCA1/LHY-TOC1 feedback loop in the circadian clock that promotes clock accuracy and is required for sustained rhythms in the absence of daily light/dark cycles. The sequence is that of Protein ELF4-LIKE 4 (EFL4) from Arabidopsis thaliana (Mouse-ear cress).